Consider the following 628-residue polypeptide: Pinene synthase, chloroplastic (628 aa).

A chloroplast-targeting transit peptide spans Met1–Leu36. Residues Asp379, Asp383, and Asp531 each contribute to the Mg(2+) site. Positions Asp379 to Asp383 match the DDXXD motif motif.

This sequence belongs to the terpene synthase family. Tpsd subfamily. The cofactor is Mg(2+). Mn(2+) serves as cofactor. K(+) is required as a cofactor.

The protein resides in the plastid. It is found in the chloroplast. The catalysed reaction is (2E)-geranyl diphosphate = (1S,5S)-alpha-pinene + diphosphate. It catalyses the reaction (2E)-geranyl diphosphate = (1S,5S)-beta-pinene + diphosphate. It participates in terpene metabolism; oleoresin biosynthesis. Involved in defensive oleoresin formation in conifers in response to insect attack or other injury. Involved in monoterpene (C10) olefins biosynthesis. A mixture of alpha- and beta-pinene is produced by this enzyme. The polypeptide is Pinene synthase, chloroplastic (ag3) (Abies grandis (Grand fir)).